Reading from the N-terminus, the 395-residue chain is S-adenosylmethionine synthase (395 aa).

Residue histidine 14 coordinates ATP. Aspartate 16 is a binding site for Mg(2+). K(+) is bound at residue glutamate 42. Residues glutamate 55 and glutamine 98 each coordinate L-methionine. Residues 98 to 108 form a flexible loop region; that stretch reads QSPDIAMGVDK. Residues 175-177, 242-243, aspartate 251, 257-258, alanine 274, and lysine 278 each bind ATP; these read DGK, RF, and RK. Aspartate 251 contacts L-methionine. Lysine 282 contacts L-methionine.

It belongs to the AdoMet synthase family. In terms of assembly, homotetramer; dimer of dimers. Requires Mg(2+) as cofactor. It depends on K(+) as a cofactor.

It is found in the cytoplasm. It carries out the reaction L-methionine + ATP + H2O = S-adenosyl-L-methionine + phosphate + diphosphate. Its pathway is amino-acid biosynthesis; S-adenosyl-L-methionine biosynthesis; S-adenosyl-L-methionine from L-methionine: step 1/1. Catalyzes the formation of S-adenosylmethionine (AdoMet) from methionine and ATP. The overall synthetic reaction is composed of two sequential steps, AdoMet formation and the subsequent tripolyphosphate hydrolysis which occurs prior to release of AdoMet from the enzyme. The polypeptide is S-adenosylmethionine synthase (Thermosipho melanesiensis (strain DSM 12029 / CIP 104789 / BI429)).